The primary structure comprises 264 residues: Hydroxyethylthiazole kinase (264 aa).

A substrate-binding site is contributed by Met55. Residues Arg130 and Ser176 each contribute to the ATP site. Gly203 lines the substrate pocket.

This sequence belongs to the Thz kinase family. The cofactor is Mg(2+).

It carries out the reaction 5-(2-hydroxyethyl)-4-methylthiazole + ATP = 4-methyl-5-(2-phosphooxyethyl)-thiazole + ADP + H(+). It participates in cofactor biosynthesis; thiamine diphosphate biosynthesis; 4-methyl-5-(2-phosphoethyl)-thiazole from 5-(2-hydroxyethyl)-4-methylthiazole: step 1/1. Catalyzes the phosphorylation of the hydroxyl group of 4-methyl-5-beta-hydroxyethylthiazole (THZ). The chain is Hydroxyethylthiazole kinase from Leptospira borgpetersenii serovar Hardjo-bovis (strain JB197).